Consider the following 390-residue polypeptide: Levoglucosan dehydrogenase (390 aa).

Positions 13, 14, 43, 81, 83, 86, 103, 104, 130, and 132 each coordinate NADH. Lys104 is a binding site for levoglucosan. Levoglucosan contacts are provided by Tyr133 and Gln163. Positions 175 and 176 each coordinate NADH. The levoglucosan site is built by Arg176, Asp189, and His193. Tyr335 is an NADH binding site.

The protein belongs to the Gfo/Idh/MocA family. Homotetramer.

It carries out the reaction levoglucosan + NAD(+) = 3-dehydrolevoglucosan + NADH + H(+). In terms of biological role, catalyzes the oxidation of levoglucosan (1,6-anhydro-beta-D-glucose, LG) to 3-dehydrolevoglucosan (3-keto-LG). Exhibits high substrate specificity toward levoglucosan and NAD(+) for the oxidative reaction. Exhibits weak activities (about 4% compared with that of LG) toward L-sorbose and 1,5-anhydro-D-glucitol, and activity toward D-xylose is also detectable (1.7%). Can also efficiently catalyzes the NADH-dependent reduction (reverse reaction) of 3-keto-LG. This chain is Levoglucosan dehydrogenase, found in Pseudarthrobacter phenanthrenivorans (strain DSM 18606 / JCM 16027 / LMG 23796 / Sphe3) (Arthrobacter phenanthrenivorans).